A 204-amino-acid polypeptide reads, in one-letter code: Holliday junction branch migration complex subunit RuvA (204 aa).

The interval 1–64 is domain I; the sequence is MIGKLKGTID…EDQLKLFGFM (64 aa). Positions 65–143 are domain II; the sequence is TALEREWFNL…AFAGEAINIA (79 aa). Positions 144-151 are flexible linker; that stretch reads LKQELGEG. Residues 152–204 form a domain III region; the sequence is VAAAPVADAVSALTNLGYSRDQAANAVAAAMKTAGDDADSAKLIRLGLKELAR.

This sequence belongs to the RuvA family. In terms of assembly, homotetramer. Forms an RuvA(8)-RuvB(12)-Holliday junction (HJ) complex. HJ DNA is sandwiched between 2 RuvA tetramers; dsDNA enters through RuvA and exits via RuvB. An RuvB hexamer assembles on each DNA strand where it exits the tetramer. Each RuvB hexamer is contacted by two RuvA subunits (via domain III) on 2 adjacent RuvB subunits; this complex drives branch migration. In the full resolvosome a probable DNA-RuvA(4)-RuvB(12)-RuvC(2) complex forms which resolves the HJ.

The protein resides in the cytoplasm. The RuvA-RuvB-RuvC complex processes Holliday junction (HJ) DNA during genetic recombination and DNA repair, while the RuvA-RuvB complex plays an important role in the rescue of blocked DNA replication forks via replication fork reversal (RFR). RuvA specifically binds to HJ cruciform DNA, conferring on it an open structure. The RuvB hexamer acts as an ATP-dependent pump, pulling dsDNA into and through the RuvAB complex. HJ branch migration allows RuvC to scan DNA until it finds its consensus sequence, where it cleaves and resolves the cruciform DNA. In Rhizobium leguminosarum bv. trifolii (strain WSM2304), this protein is Holliday junction branch migration complex subunit RuvA.